We begin with the raw amino-acid sequence, 69 residues long: uncharacterized protein (69 aa).

2 4Fe-4S ferredoxin-type domains span residues 2–30 and 38–67; these read KIEI…KSKK and PPIP…IELS. 8 residues coordinate [4Fe-4S] cluster: C10, C13, C16, C20, C47, C50, C53, and C57.

Requires [4Fe-4S] cluster as cofactor.

This is an uncharacterized protein from Methanocaldococcus jannaschii (strain ATCC 43067 / DSM 2661 / JAL-1 / JCM 10045 / NBRC 100440) (Methanococcus jannaschii).